Reading from the N-terminus, the 307-residue chain is MKKNLFLVSVFASLFVGTANNALAYPMYAQQGYENPREATGRIVCANCHLAQKPVDIEVPQAVLPDSVFEAVVKIPYNQEVKQVLGNGKKGGLNVGAVLILPDGFTMAPADRMSAELKEKVGKLYFQPYSEDKQNILIVGPVPGKKYSEMTFPLLSPDPATNKKVNYLTYPIYLGGNRGRGQVYPDGSKSNNTVYNAAAAGKIAAINPTEKGTDVVIDKVDGGSVTVAIPSGPDLLVSVGDTVAADQPITNNPNVGGFGQGETEIVLQNPARLQGLVIFLGFVLIAQVFLVLKKKQFEKVQLSEMNF.

The first 24 residues, 1–24 (MKKNLFLVSVFASLFVGTANNALA), serve as a signal peptide directing secretion. Tyr-25, Cys-45, Cys-48, and His-49 together coordinate heme. A helical membrane pass occupies residues 273–293 (LQGLVIFLGFVLIAQVFLVLK).

It belongs to the cytochrome f family. In terms of assembly, the 4 large subunits of the cytochrome b6-f complex are cytochrome b6, subunit IV (17 kDa polypeptide, petD), cytochrome f and the Rieske protein, while the 4 small subunits are PetG, PetL, PetM and PetN. The complex functions as a dimer. Heme is required as a cofactor.

It is found in the plastid. The protein resides in the chloroplast thylakoid membrane. In terms of biological role, component of the cytochrome b6-f complex, which mediates electron transfer between photosystem II (PSII) and photosystem I (PSI), cyclic electron flow around PSI, and state transitions. In Ostreococcus tauri, this protein is Cytochrome f.